A 260-amino-acid chain; its full sequence is MKGFILALQFFTRIPININIDFNEKNIKRAFYFLPLIGGLIAGLVLIPIYFLPQKYIEISGFISLLLYLFLTGSIHLDGVGDTIDGFFSARKKEKILEIMQDPRIGTYGTIGLNVFLLLRYINYSTIIPDAGLLILAGIISRLSGLAVVVFSKPAKDTGLGLLFHKSASKFSFFFWLVLVCFLSLFTPEIAAFSKIQGTFILVERLKYLLLPLTAFILTFIIIRISYKKIGGITGDVNGLIVELTELAVLSTSFFINVHL.

7 consecutive transmembrane segments (helical) span residues 31 to 51, 57 to 77, 108 to 128, 131 to 151, 173 to 193, 206 to 226, and 240 to 260; these read FYFL…PIYF, IEIS…SIHL, YGTI…STII, AGLL…VVVF, FFFW…IAAF, LKYL…IRIS, and LIVE…NVHL.

This sequence belongs to the CobS family. Mg(2+) serves as cofactor.

The protein resides in the cell inner membrane. The enzyme catalyses alpha-ribazole + adenosylcob(III)inamide-GDP = adenosylcob(III)alamin + GMP + H(+). It catalyses the reaction alpha-ribazole 5'-phosphate + adenosylcob(III)inamide-GDP = adenosylcob(III)alamin 5'-phosphate + GMP + H(+). Its pathway is cofactor biosynthesis; adenosylcobalamin biosynthesis; adenosylcobalamin from cob(II)yrinate a,c-diamide: step 7/7. Its function is as follows. Joins adenosylcobinamide-GDP and alpha-ribazole to generate adenosylcobalamin (Ado-cobalamin). Also synthesizes adenosylcobalamin 5'-phosphate from adenosylcobinamide-GDP and alpha-ribazole 5'-phosphate. In Treponema denticola (strain ATCC 35405 / DSM 14222 / CIP 103919 / JCM 8153 / KCTC 15104), this protein is Adenosylcobinamide-GDP ribazoletransferase.